The following is a 1413-amino-acid chain: DNA-directed RNA polymerase subunit beta' (1413 aa).

Residues Cys70, Cys72, Cys85, and Cys88 each contribute to the Zn(2+) site. Mg(2+)-binding residues include Asp460, Asp462, and Asp464. Residues Cys814, Cys888, Cys895, and Cys898 each coordinate Zn(2+).

The protein belongs to the RNA polymerase beta' chain family. The RNAP catalytic core consists of 2 alpha, 1 beta, 1 beta' and 1 omega subunit. When a sigma factor is associated with the core the holoenzyme is formed, which can initiate transcription. Mg(2+) is required as a cofactor. Zn(2+) serves as cofactor.

It catalyses the reaction RNA(n) + a ribonucleoside 5'-triphosphate = RNA(n+1) + diphosphate. In terms of biological role, DNA-dependent RNA polymerase catalyzes the transcription of DNA into RNA using the four ribonucleoside triphosphates as substrates. The polypeptide is DNA-directed RNA polymerase subunit beta' (Bordetella avium (strain 197N)).